Consider the following 492-residue polypeptide: UTP--glucose-1-phosphate uridylyltransferase (492 aa).

Residues Leu-110–Gly-113, Lys-124, Gln-183, and Gly-210 each bind UTP. Position 112 to 113 (Gly-112 to Gly-113) interacts with substrate. Residue Lys-124 participates in Mg(2+) binding. Substrate-binding positions include His-211 and Asn-239–Asp-241. 2 residues coordinate UTP: Asp-241 and Lys-379. Asp-241 serves as a coordination point for Mg(2+). Lys-379 is a catalytic residue. The segment at Val-441–His-492 is oligomerization.

The protein belongs to the UDPGP type 1 family. In terms of assembly, homooctamer.

The enzyme catalyses alpha-D-glucose 1-phosphate + UTP + H(+) = UDP-alpha-D-glucose + diphosphate. Its function is as follows. Plays a central role as a glucosyl donor in cellular metabolic pathways. The chain is UTP--glucose-1-phosphate uridylyltransferase (UGP1) from Encephalitozoon cuniculi (strain GB-M1) (Microsporidian parasite).